The sequence spans 275 residues: Hydroxyethylthiazole kinase (275 aa).

Residue M50 coordinates substrate. The ATP site is built by R126 and S171. A200 is a binding site for substrate.

This sequence belongs to the Thz kinase family. Requires Mg(2+) as cofactor.

It carries out the reaction 5-(2-hydroxyethyl)-4-methylthiazole + ATP = 4-methyl-5-(2-phosphooxyethyl)-thiazole + ADP + H(+). The protein operates within cofactor biosynthesis; thiamine diphosphate biosynthesis; 4-methyl-5-(2-phosphoethyl)-thiazole from 5-(2-hydroxyethyl)-4-methylthiazole: step 1/1. Its function is as follows. Catalyzes the phosphorylation of the hydroxyl group of 4-methyl-5-beta-hydroxyethylthiazole (THZ). This chain is Hydroxyethylthiazole kinase, found in Acinetobacter baumannii (strain SDF).